The sequence spans 328 residues: GTP 3',8-cyclase (328 aa).

Positions 1 to 229 (MNQVDYLRIS…ESQVRGAGPA (229 aa)) constitute a Radical SAM core domain. Arg-8 is a binding site for GTP. [4Fe-4S] cluster contacts are provided by Cys-15 and Cys-19. S-adenosyl-L-methionine is bound at residue Tyr-21. Cys-22 serves as a coordination point for [4Fe-4S] cluster. Residue Arg-60 participates in GTP binding. Gly-64 is an S-adenosyl-L-methionine binding site. Position 91 (Thr-91) interacts with GTP. Ser-115 provides a ligand contact to S-adenosyl-L-methionine. GTP is bound at residue Lys-155. Met-189 contacts S-adenosyl-L-methionine. The [4Fe-4S] cluster site is built by Cys-252 and Cys-255. 257 to 259 (RMR) contributes to the GTP binding site. Residue Cys-269 participates in [4Fe-4S] cluster binding.

It belongs to the radical SAM superfamily. MoaA family. In terms of assembly, monomer and homodimer. It depends on [4Fe-4S] cluster as a cofactor.

The enzyme catalyses GTP + AH2 + S-adenosyl-L-methionine = (8S)-3',8-cyclo-7,8-dihydroguanosine 5'-triphosphate + 5'-deoxyadenosine + L-methionine + A + H(+). The protein operates within cofactor biosynthesis; molybdopterin biosynthesis. Its function is as follows. Catalyzes the cyclization of GTP to (8S)-3',8-cyclo-7,8-dihydroguanosine 5'-triphosphate. This chain is GTP 3',8-cyclase, found in Nostoc punctiforme (strain ATCC 29133 / PCC 73102).